A 109-amino-acid polypeptide reads, in one-letter code: Phosphoribosyl-ATP pyrophosphatase (109 aa).

This sequence belongs to the PRA-PH family.

The protein localises to the cytoplasm. The catalysed reaction is 1-(5-phospho-beta-D-ribosyl)-ATP + H2O = 1-(5-phospho-beta-D-ribosyl)-5'-AMP + diphosphate + H(+). It participates in amino-acid biosynthesis; L-histidine biosynthesis; L-histidine from 5-phospho-alpha-D-ribose 1-diphosphate: step 2/9. The chain is Phosphoribosyl-ATP pyrophosphatase from Marinobacter nauticus (strain ATCC 700491 / DSM 11845 / VT8) (Marinobacter aquaeolei).